Reading from the N-terminus, the 206-residue chain is Sclerostin domain-containing protein 1 (206 aa).

The signal sequence occupies residues 1 to 23; it reads MLPPAIHFYLLPLACILMKSCLA. A glycan (N-linked (GlcNAc...) asparagine) is linked at Asn47. Cystine bridges form between Cys75/Cys133, Cys89/Cys147, Cys100/Cys163, and Cys104/Cys165. In terms of domain architecture, CTCK spans 75–170; that stretch reads CRELRSTKYI…TACKCKRYTR (96 aa). The N-linked (GlcNAc...) asparagine glycan is linked to Asn173. Residues 176–206 form a disordered region; sequence SHNFESMSPAKPVQHHRERKRASKSSKHSMS. Residues 188-206 show a composition bias toward basic residues; it reads VQHHRERKRASKSSKHSMS.

This sequence belongs to the sclerostin family. In terms of assembly, interacts with BMP2, BMP4, BMP6 and BMP7 with high affinity.

The protein localises to the secreted. Its function is as follows. Directly antagonizes activity of BMP2, BMP4, BMP6 and BMP7 in a dose-dependent manner. Enhances Wnt signaling and inhibits TGF-beta signaling. May be involved in the onset of endometrial receptivity for implantation/sensitization for the decidual cell reaction. In Pongo abelii (Sumatran orangutan), this protein is Sclerostin domain-containing protein 1 (SOSTDC1).